We begin with the raw amino-acid sequence, 1320 residues long: Sal-like protein 3 (1320 aa).

Residues Met1 to His11 are compositionally biased toward basic residues. Residues Met1–Glu49 are disordered. Over residues Gly40 to Glu49 the composition is skewed to low complexity. The segment at Ser51–Cys73 adopts a C2H2-type 1; atypical zinc-finger fold. Disordered stretches follow at residues Asp84–Met166 and Leu271–Asn367. Residues Ala88–Ala100 are compositionally biased toward pro residues. The residue at position 109 (Ser109) is a Phosphoserine. Residues Ser121–Glu131 are compositionally biased toward basic and acidic residues. Over residues Pro143–Glu160 the composition is skewed to pro residues. Low complexity predominate over residues Leu271–Ala289. Over residues His295–Ala311 the composition is skewed to polar residues. 2 stretches are compositionally biased toward low complexity: residues Ser323–Val342 and Pro355–Asn367. 2 C2H2-type zinc fingers span residues His427–His449 and Phe455–His477. The interval Gly534 to Gly623 is disordered. Positions Gly543 to Thr554 are enriched in polar residues. Residues Pro555–Ser568 are compositionally biased toward low complexity. Polar residues predominate over residues Glu569–Gly583. 3 consecutive C2H2-type zinc fingers follow at residues Asn692–His714, Phe720–His742, and His752–His774. Disordered regions lie at residues Ser807–Pro846 and Val878–Gly972. Residues Phe809–Glu823 are compositionally biased toward acidic residues. Composition is skewed to low complexity over residues Pro834–Pro846 and Arg902–Ser923. Ser932 is subject to Phosphoserine. C2H2-type zinc fingers lie at residues Thr997–His1019, Phe1025–His1047, His1133–His1155, and Phe1161–His1183. Ser1197 carries the post-translational modification Phosphoserine.

This sequence belongs to the sal C2H2-type zinc-finger protein family. As to expression, in adult brain, testis and kidney. In lower levels also in adult ovaries and embryonic stem cells. In embryo in developing neuroectoderm of brain, inner ear and spinal cord. Also weakly and transiently expressed in embryonic branchial arches, notochord, limb buds and heart.

The protein localises to the nucleus. In terms of biological role, probable transcription factor. This chain is Sal-like protein 3 (Sall3), found in Mus musculus (Mouse).